Here is a 935-residue protein sequence, read N- to C-terminus: Isoleucine--tRNA ligase (935 aa).

A 'HIGH' region motif is present at residues 58-68 (PYANGNLHLGH). Residue Glu559 participates in L-isoleucyl-5'-AMP binding. The 'KMSKS' region motif lies at 600–604 (KMSKS). Lys603 contacts ATP. Positions 898, 901, 918, and 921 each coordinate Zn(2+).

Belongs to the class-I aminoacyl-tRNA synthetase family. IleS type 1 subfamily. In terms of assembly, monomer. It depends on Zn(2+) as a cofactor.

The protein localises to the cytoplasm. The enzyme catalyses tRNA(Ile) + L-isoleucine + ATP = L-isoleucyl-tRNA(Ile) + AMP + diphosphate. In terms of biological role, catalyzes the attachment of isoleucine to tRNA(Ile). As IleRS can inadvertently accommodate and process structurally similar amino acids such as valine, to avoid such errors it has two additional distinct tRNA(Ile)-dependent editing activities. One activity is designated as 'pretransfer' editing and involves the hydrolysis of activated Val-AMP. The other activity is designated 'posttransfer' editing and involves deacylation of mischarged Val-tRNA(Ile). This is Isoleucine--tRNA ligase from Haemophilus ducreyi (strain 35000HP / ATCC 700724).